Consider the following 124-residue polypeptide: MATINQLVRKPRVKKVVKSNVPALEACPQKRGVCTRVYTTTPKKPNSALRKVCRIRLTNGFEVISYIGGEGHNLQEHSVVLIRGGRVKDLPGVRYHTVRGALDCAGVKDRKQGRSKYGVKRPKA.

A 3-methylthioaspartic acid modification is found at Asp-89.

It belongs to the universal ribosomal protein uS12 family. In terms of assembly, part of the 30S ribosomal subunit. Contacts proteins S8 and S17. May interact with IF1 in the 30S initiation complex.

Its function is as follows. With S4 and S5 plays an important role in translational accuracy. Functionally, interacts with and stabilizes bases of the 16S rRNA that are involved in tRNA selection in the A site and with the mRNA backbone. Located at the interface of the 30S and 50S subunits, it traverses the body of the 30S subunit contacting proteins on the other side and probably holding the rRNA structure together. The combined cluster of proteins S8, S12 and S17 appears to hold together the shoulder and platform of the 30S subunit. The polypeptide is Small ribosomal subunit protein uS12 (Haemophilus ducreyi (strain 35000HP / ATCC 700724)).